Consider the following 95-residue polypeptide: Cell division topological specificity factor (95 aa).

Belongs to the MinE family.

Prevents the cell division inhibition by proteins MinC and MinD at internal division sites while permitting inhibition at polar sites. This ensures cell division at the proper site by restricting the formation of a division septum at the midpoint of the long axis of the cell. This is Cell division topological specificity factor from Trichodesmium erythraeum (strain IMS101).